The primary structure comprises 426 residues: UPF0229 protein YeaH (426 aa).

Residues 78-92 (GNDHFIQNDRIERPQ) are compositionally biased toward basic and acidic residues. Residues 78-108 (GNDHFIQNDRIERPQDGGGSGSGNGQASQDG) are disordered.

This sequence belongs to the UPF0229 family.

This is UPF0229 protein YeaH from Salmonella arizonae (strain ATCC BAA-731 / CDC346-86 / RSK2980).